We begin with the raw amino-acid sequence, 509 residues long: ATP synthase subunit alpha (509 aa).

Residue 169–176 (GDRQTGKT) coordinates ATP.

Belongs to the ATPase alpha/beta chains family. In terms of assembly, F-type ATPases have 2 components, CF(1) - the catalytic core - and CF(0) - the membrane proton channel. CF(1) has five subunits: alpha(3), beta(3), gamma(1), delta(1), epsilon(1). CF(0) has three main subunits: a(1), b(2) and c(9-12). The alpha and beta chains form an alternating ring which encloses part of the gamma chain. CF(1) is attached to CF(0) by a central stalk formed by the gamma and epsilon chains, while a peripheral stalk is formed by the delta and b chains.

Its subcellular location is the cell inner membrane. The catalysed reaction is ATP + H2O + 4 H(+)(in) = ADP + phosphate + 5 H(+)(out). In terms of biological role, produces ATP from ADP in the presence of a proton gradient across the membrane. The alpha chain is a regulatory subunit. This Sinorhizobium medicae (strain WSM419) (Ensifer medicae) protein is ATP synthase subunit alpha.